The sequence spans 61 residues: Small ribosomal subunit protein uS14 (61 aa).

Zn(2+) contacts are provided by cysteine 24, cysteine 27, cysteine 40, and cysteine 43.

Belongs to the universal ribosomal protein uS14 family. Zinc-binding uS14 subfamily. In terms of assembly, part of the 30S ribosomal subunit. Contacts proteins S3 and S10. Zn(2+) is required as a cofactor.

Its function is as follows. Binds 16S rRNA, required for the assembly of 30S particles and may also be responsible for determining the conformation of the 16S rRNA at the A site. The protein is Small ribosomal subunit protein uS14 of Geobacter metallireducens (strain ATCC 53774 / DSM 7210 / GS-15).